Consider the following 156-residue polypeptide: Ribosomal RNA large subunit methyltransferase H (156 aa).

S-adenosyl-L-methionine-binding positions include Leu73, Gly104, and 123-128 (LSPLTL).

Belongs to the RNA methyltransferase RlmH family. In terms of assembly, homodimer.

It is found in the cytoplasm. The enzyme catalyses pseudouridine(1915) in 23S rRNA + S-adenosyl-L-methionine = N(3)-methylpseudouridine(1915) in 23S rRNA + S-adenosyl-L-homocysteine + H(+). Specifically methylates the pseudouridine at position 1915 (m3Psi1915) in 23S rRNA. In Pectobacterium carotovorum subsp. carotovorum (strain PC1), this protein is Ribosomal RNA large subunit methyltransferase H.